We begin with the raw amino-acid sequence, 559 residues long: Urocanate hydratase (559 aa).

NAD(+)-binding positions include G53–G54, Q131, G177–G179, E197, R202, N243–A244, Q264–H268, Y274–L275, and Y323. Residue C411 is part of the active site. An NAD(+)-binding site is contributed by G493.

Belongs to the urocanase family. NAD(+) is required as a cofactor.

The protein resides in the cytoplasm. The catalysed reaction is 4-imidazolone-5-propanoate = trans-urocanate + H2O. Its pathway is amino-acid degradation; L-histidine degradation into L-glutamate; N-formimidoyl-L-glutamate from L-histidine: step 2/3. Its function is as follows. Catalyzes the conversion of urocanate to 4-imidazolone-5-propionate. The chain is Urocanate hydratase from Pseudomonas aeruginosa (strain ATCC 15692 / DSM 22644 / CIP 104116 / JCM 14847 / LMG 12228 / 1C / PRS 101 / PAO1).